Reading from the N-terminus, the 851-residue chain is DNA mismatch repair protein MutS (851 aa).

602–609 (GPNMSGKS) serves as a coordination point for ATP.

Belongs to the DNA mismatch repair MutS family.

Functionally, this protein is involved in the repair of mismatches in DNA. It is possible that it carries out the mismatch recognition step. This protein has a weak ATPase activity. This chain is DNA mismatch repair protein MutS, found in Streptococcus pyogenes serotype M3 (strain SSI-1).